A 55-amino-acid polypeptide reads, in one-letter code: Cytochrome b-c1 complex subunit 9 (55 aa).

Topologically, residues 1–15 (MKVIYNTLFKRTSTY) are mitochondrial matrix. A helical transmembrane segment spans residues 16–41 (AVAIIASAFFFERALDVTSVAIFEGI). Topologically, residues 42 to 55 (NKGKLWKDIKGKYE) are chloroplast intermembrane.

It belongs to the UQCR10/QCR9 family. In terms of assembly, component of the ubiquinol-cytochrome c oxidoreductase (cytochrome b-c1 complex, complex III, CIII), a multisubunit enzyme composed of 3 respiratory subunits cytochrome b, cytochrome c1 and Rieske protein, 2 core protein subunits, and additional low-molecular weight protein subunits. The complex exists as an obligatory dimer and forms supercomplexes (SCs) in the inner mitochondrial membrane with cytochrome c oxidase (complex IV, CIV).

Its subcellular location is the mitochondrion inner membrane. Its function is as follows. Component of the ubiquinol-cytochrome c oxidoreductase, a multisubunit transmembrane complex that is part of the mitochondrial electron transport chain which drives oxidative phosphorylation. The respiratory chain contains 3 multisubunit complexes succinate dehydrogenase (complex II, CII), ubiquinol-cytochrome c oxidoreductase (cytochrome b-c1 complex, complex III, CIII) and cytochrome c oxidase (complex IV, CIV), that cooperate to transfer electrons derived from NADH and succinate to molecular oxygen, creating an electrochemical gradient over the inner membrane that drives transmembrane transport and the ATP synthase. The cytochrome b-c1 complex catalyzes electron transfer from ubiquinol to cytochrome c, linking this redox reaction to translocation of protons across the mitochondrial inner membrane, with protons being carried across the membrane as hydrogens on the quinol. In the process called Q cycle, 2 protons are consumed from the matrix, 4 protons are released into the intermembrane space and 2 electrons are passed to cytochrome c. The chain is Cytochrome b-c1 complex subunit 9 (ox) from Drosophila melanogaster (Fruit fly).